The primary structure comprises 343 residues: Cytoplasmic tRNA 2-thiolation protein 1 (343 aa).

Belongs to the TtcA family. CTU1/NCS6/ATPBD3 subfamily.

It localises to the cytoplasm. It functions in the pathway tRNA modification; 5-methoxycarbonylmethyl-2-thiouridine-tRNA biosynthesis. Functionally, plays a central role in 2-thiolation of mcm(5)S(2)U at tRNA wobble positions of tRNA(Lys), tRNA(Glu) and tRNA(Gln). Directly binds tRNAs and probably acts by catalyzing adenylation of tRNAs, an intermediate required for 2-thiolation. It is unclear whether it acts as a sulfurtransferase that transfers sulfur from thiocarboxylated URM1 onto the uridine of tRNAs at wobble position. In Drosophila willistoni (Fruit fly), this protein is Cytoplasmic tRNA 2-thiolation protein 1.